The following is a 184-amino-acid chain: MLTMKDIIRDGHPTLRAKAEEVPLPLSTEDRQLIDDMLEFLKMSQDEEQSRKYQLRSGVGIAAPQLNHKKRMLVIHFYDEKKGDYVTHQLINPKIISHSVEKSYLPTGEGCLSVDEAVPGIVHRYARITVKAYTPDGEEVKLRLKDFSAIVAQHEIDHLNGVMFYDHIDKADPMKVQKDAIAVE.

Residues Cys-111 and His-154 each coordinate Fe cation. The active site involves Glu-155. Position 158 (His-158) interacts with Fe cation.

The protein belongs to the polypeptide deformylase family. It depends on Fe(2+) as a cofactor.

The enzyme catalyses N-terminal N-formyl-L-methionyl-[peptide] + H2O = N-terminal L-methionyl-[peptide] + formate. Removes the formyl group from the N-terminal Met of newly synthesized proteins. Requires at least a dipeptide for an efficient rate of reaction. N-terminal L-methionine is a prerequisite for activity but the enzyme has broad specificity at other positions. This Macrococcus caseolyticus (strain JCSC5402) (Macrococcoides caseolyticum) protein is Peptide deformylase.